A 668-amino-acid chain; its full sequence is CLK4-associating serine/arginine rich protein (668 aa).

Residue Ser101 is modified to Phosphoserine. 2 disordered regions span residues 173-232 (AEVE…GMAD) and 252-668 (AKAL…HYRH). Residues 182 to 214 (PEEEESPAEEESNSDEDEVIPDIDVEVDVDELN) show a composition bias toward acidic residues. The segment covering 265–283 (RRSRRQRREFREKRLRGRK) has biased composition (basic residues). Residues Ser285 and Ser294 each carry the phosphoserine modification. The span at 290-313 (ARRDSPTYDPYKRSPSESSSESRS) shows a compositional bias: basic and acidic residues. A Phosphothreonine modification is found at Thr327. Phosphoserine is present on residues Ser331 and Ser335. Residues 340-353 (AAAAAAAAASGAAP) show a composition bias toward low complexity. The segment covering 354-365 (GKPPAPPQPGGP) has biased composition (pro residues). Over residues 378-395 (SSSSASRTSSSRSSSRSS) the composition is skewed to low complexity. Residues 396-435 (SRSRRGYYRSGRHARSRSRSWSRSRSRSRRYSRSRSRGRR) are compositionally biased toward basic residues. Residues 436–446 (HSDGGSRDGHR) show a composition bias toward basic and acidic residues. Residues 475 to 486 (RGARGPRHHSSS) show a composition bias toward basic residues. Composition is skewed to low complexity over residues 487-510 (HSRSSWSLSPSRSRSLTRSGSRSQ) and 518-527 (QSHSQSQSHS). Ser541 is subject to Phosphoserine. At Thr567 the chain carries Phosphothreonine. Positions 579 to 641 (ALNRQFKADK…ERQYSRQSRS (63 aa)) form a coiled coil. 2 stretches are compositionally biased toward basic and acidic residues: residues 584 to 611 (FKADKKAAQEKMIQQEHERQEREDELRA) and 619 to 635 (KERERREKEREEWERQY). The span at 636-645 (SRQSRSPSPR) shows a compositional bias: low complexity. Basic residues predominate over residues 653–668 (SRRRSRSRSRSPHYRH).

Belongs to the splicing factor SR family. As to quaternary structure, probably interacts with CLK4. Phosphorylated in vitro by CLK4.

The protein resides in the nucleus. Probably functions as an alternative splicing regulator. May regulate the mRNA splicing of genes such as CLK1. May act by regulating members of the CLK kinase family. This is CLK4-associating serine/arginine rich protein (Clasrp) from Rattus norvegicus (Rat).